Consider the following 295-residue polypeptide: 4-hydroxy-tetrahydrodipicolinate synthase (295 aa).

Threonine 48 contacts pyruvate. The active-site Proton donor/acceptor is the tyrosine 135. Catalysis depends on lysine 163, which acts as the Schiff-base intermediate with substrate. Residue valine 204 coordinates pyruvate.

This sequence belongs to the DapA family. As to quaternary structure, homotetramer; dimer of dimers.

Its subcellular location is the cytoplasm. It catalyses the reaction L-aspartate 4-semialdehyde + pyruvate = (2S,4S)-4-hydroxy-2,3,4,5-tetrahydrodipicolinate + H2O + H(+). It functions in the pathway amino-acid biosynthesis; L-lysine biosynthesis via DAP pathway; (S)-tetrahydrodipicolinate from L-aspartate: step 3/4. In terms of biological role, catalyzes the condensation of (S)-aspartate-beta-semialdehyde [(S)-ASA] and pyruvate to 4-hydroxy-tetrahydrodipicolinate (HTPA). In Francisella philomiragia subsp. philomiragia (strain ATCC 25017 / CCUG 19701 / FSC 153 / O#319-036), this protein is 4-hydroxy-tetrahydrodipicolinate synthase.